The chain runs to 597 residues: Elongation factor 4 (597 aa).

In terms of domain architecture, tr-type G spans 2-184 (QNIRNFSIIA…DIVKKIPAPE (183 aa)). GTP-binding positions include 14–19 (DHGKST) and 131–134 (NKID).

This sequence belongs to the TRAFAC class translation factor GTPase superfamily. Classic translation factor GTPase family. LepA subfamily.

It localises to the cell inner membrane. The catalysed reaction is GTP + H2O = GDP + phosphate + H(+). Required for accurate and efficient protein synthesis under certain stress conditions. May act as a fidelity factor of the translation reaction, by catalyzing a one-codon backward translocation of tRNAs on improperly translocated ribosomes. Back-translocation proceeds from a post-translocation (POST) complex to a pre-translocation (PRE) complex, thus giving elongation factor G a second chance to translocate the tRNAs correctly. Binds to ribosomes in a GTP-dependent manner. This Haemophilus ducreyi (strain 35000HP / ATCC 700724) protein is Elongation factor 4.